A 654-amino-acid chain; its full sequence is Translation factor GUF1, mitochondrial (654 aa).

A tr-type G domain is found at glutamate 57 to valine 237. GTP is bound by residues alanine 66–serine 73, aspartate 130–histidine 134, and asparagine 184–aspartate 187.

It belongs to the TRAFAC class translation factor GTPase superfamily. Classic translation factor GTPase family. LepA subfamily.

The protein localises to the mitochondrion inner membrane. The enzyme catalyses GTP + H2O = GDP + phosphate + H(+). Functionally, promotes mitochondrial protein synthesis. May act as a fidelity factor of the translation reaction, by catalyzing a one-codon backward translocation of tRNAs on improperly translocated ribosomes. Binds to mitochondrial ribosomes in a GTP-dependent manner. The chain is Translation factor GUF1, mitochondrial from Candida dubliniensis (strain CD36 / ATCC MYA-646 / CBS 7987 / NCPF 3949 / NRRL Y-17841) (Yeast).